We begin with the raw amino-acid sequence, 419 residues long: CDP-diacylglycerol--serine O-phosphatidyltransferase 3 (419 aa).

The interval methionine 1–histidine 51 is disordered. The span at proline 33–serine 47 shows a compositional bias: low complexity. The next 7 membrane-spanning stretches (helical) occupy residues proline 103 to leucine 123, tryptophan 142 to isoleucine 162, valine 168 to phenylalanine 188, leucine 260 to leucine 280, tryptophan 287 to methionine 307, phenylalanine 359 to leucine 379, and tryptophan 384 to isoleucine 404.

This sequence belongs to the CDP-alcohol phosphatidyltransferase class-I family.

The protein resides in the endoplasmic reticulum membrane. The catalysed reaction is a CDP-1,2-diacyl-sn-glycerol + L-serine = a 1,2-diacyl-sn-glycero-3-phospho-L-serine + CMP + H(+). It functions in the pathway phospholipid metabolism; phosphatidylethanolamine biosynthesis; phosphatidylethanolamine from CDP-diacylglycerol: step 1/2. Its function is as follows. Catalyzes a base-exchange reaction in which the polar head group of phosphatidylethanolamine (PE) or phosphatidylcholine (PC) is replaced by L-serine. This Oryza sativa subsp. japonica (Rice) protein is CDP-diacylglycerol--serine O-phosphatidyltransferase 3 (PSS3).